The following is a 539-amino-acid chain: uncharacterized protein (539 aa).

Helical transmembrane passes span 4–22 (LVEN…GLLL), 27–46 (IFGF…ALST), 56–78 (LIYV…PGFF), 90–112 (ALTL…VLNI), and 155–177 (PVVA…IAIF). 2 consecutive RCK C-terminal domains span residues 187–269 (KEAE…AIGE) and 271–352 (IDGD…LLGD). Helical transmembrane passes span 360–382 (FNLL…EFPL), 422–444 (LALR…GAGF), 453–475 (SLTI…LFVG), and 516–538 (YTSV…LFLL).

It belongs to the AAE transporter (TC 2.A.81) family.

The protein resides in the cell membrane. This is an uncharacterized protein from Corynebacterium glutamicum (strain ATCC 13032 / DSM 20300 / JCM 1318 / BCRC 11384 / CCUG 27702 / LMG 3730 / NBRC 12168 / NCIMB 10025 / NRRL B-2784 / 534).